We begin with the raw amino-acid sequence, 493 residues long: Lysine--tRNA ligase (493 aa).

Mg(2+) contacts are provided by Glu403 and Glu410.

This sequence belongs to the class-II aminoacyl-tRNA synthetase family. Homodimer. The cofactor is Mg(2+).

Its subcellular location is the cytoplasm. The enzyme catalyses tRNA(Lys) + L-lysine + ATP = L-lysyl-tRNA(Lys) + AMP + diphosphate. The chain is Lysine--tRNA ligase from Wigglesworthia glossinidia brevipalpis.